A 212-amino-acid polypeptide reads, in one-letter code: ATP phosphoribosyltransferase (212 aa).

It belongs to the ATP phosphoribosyltransferase family. Short subfamily. In terms of assembly, heteromultimer composed of HisG and HisZ subunits.

The protein resides in the cytoplasm. The enzyme catalyses 1-(5-phospho-beta-D-ribosyl)-ATP + diphosphate = 5-phospho-alpha-D-ribose 1-diphosphate + ATP. It functions in the pathway amino-acid biosynthesis; L-histidine biosynthesis; L-histidine from 5-phospho-alpha-D-ribose 1-diphosphate: step 1/9. Its function is as follows. Catalyzes the condensation of ATP and 5-phosphoribose 1-diphosphate to form N'-(5'-phosphoribosyl)-ATP (PR-ATP). Has a crucial role in the pathway because the rate of histidine biosynthesis seems to be controlled primarily by regulation of HisG enzymatic activity. In Citrifermentans bemidjiense (strain ATCC BAA-1014 / DSM 16622 / JCM 12645 / Bem) (Geobacter bemidjiensis), this protein is ATP phosphoribosyltransferase.